A 211-amino-acid chain; its full sequence is Protein-L-isoaspartate O-methyltransferase (211 aa).

S62 is a catalytic residue.

This sequence belongs to the methyltransferase superfamily. L-isoaspartyl/D-aspartyl protein methyltransferase family.

The protein localises to the cytoplasm. It catalyses the reaction [protein]-L-isoaspartate + S-adenosyl-L-methionine = [protein]-L-isoaspartate alpha-methyl ester + S-adenosyl-L-homocysteine. Functionally, catalyzes the methyl esterification of L-isoaspartyl residues in peptides and proteins that result from spontaneous decomposition of normal L-aspartyl and L-asparaginyl residues. It plays a role in the repair and/or degradation of damaged proteins. In Shewanella putrefaciens (strain CN-32 / ATCC BAA-453), this protein is Protein-L-isoaspartate O-methyltransferase.